Here is a 420-residue protein sequence, read N- to C-terminus: uncharacterized protein (420 aa).

Residues 79–420 (GKGIDNEAAM…AVNTIRGAES (342 aa)) form the YcaO domain.

This is an uncharacterized protein from Rhizobium leguminosarum bv. trifolii.